Reading from the N-terminus, the 267-residue chain is Thymidylate synthase (267 aa).

Arginine 24 is a dUMP binding site. Histidine 54 serves as a coordination point for (6R)-5,10-methylene-5,6,7,8-tetrahydrofolate. 129–130 serves as a coordination point for dUMP; the sequence is RR. The active-site Nucleophile is cysteine 149. DUMP contacts are provided by residues 169–172, asparagine 180, and 210–212; these read RSAD and HIY. A (6R)-5,10-methylene-5,6,7,8-tetrahydrofolate-binding site is contributed by aspartate 172. (6R)-5,10-methylene-5,6,7,8-tetrahydrofolate is bound at residue alanine 266.

The protein belongs to the thymidylate synthase family. Bacterial-type ThyA subfamily. In terms of assembly, homodimer.

Its subcellular location is the cytoplasm. The catalysed reaction is dUMP + (6R)-5,10-methylene-5,6,7,8-tetrahydrofolate = 7,8-dihydrofolate + dTMP. Its pathway is pyrimidine metabolism; dTTP biosynthesis. In terms of biological role, catalyzes the reductive methylation of 2'-deoxyuridine-5'-monophosphate (dUMP) to 2'-deoxythymidine-5'-monophosphate (dTMP) while utilizing 5,10-methylenetetrahydrofolate (mTHF) as the methyl donor and reductant in the reaction, yielding dihydrofolate (DHF) as a by-product. This enzymatic reaction provides an intracellular de novo source of dTMP, an essential precursor for DNA biosynthesis. The polypeptide is Thymidylate synthase (Arthrobacter sp. (strain FB24)).